We begin with the raw amino-acid sequence, 232 residues long: Large ribosomal subunit protein uL1 (232 aa).

The protein belongs to the universal ribosomal protein uL1 family. In terms of assembly, part of the 50S ribosomal subunit.

Its function is as follows. Binds directly to 23S rRNA. The L1 stalk is quite mobile in the ribosome, and is involved in E site tRNA release. Protein L1 is also a translational repressor protein, it controls the translation of the L11 operon by binding to its mRNA. The protein is Large ribosomal subunit protein uL1 of Hahella chejuensis (strain KCTC 2396).